A 152-amino-acid chain; its full sequence is Protein ripply3 (152 aa).

Over residues 1 to 24 the composition is skewed to basic and acidic residues; that stretch reads MRPEAAGVREARGRLCHCPGDDPG. 2 disordered regions span residues 1–76 and 113–152; these read MRPE…GAFG and FYNDDSESGSEEEQEEEAQPNHLQCLEAEVRDSAQEERAE. The short motif at 40 to 43 is the WRPW motif element; sequence WRPW. Positions 79 to 114 are ripply homology domain; sequence HPVRLYLPVSKRQEYLQSSGEKVLASFPVQATIHFY. Residues 116–130 are compositionally biased toward acidic residues; sequence DDSESGSEEEQEEEA. The segment covering 140–152 has biased composition (basic and acidic residues); the sequence is AEVRDSAQEERAE.

It belongs to the ripply family. As to quaternary structure, interacts with TBX1.

Its subcellular location is the nucleus. In terms of biological role, acts as a transcriptional corepressor. Negative regulator of the transcriptional activity of TBX1. Plays a role in the development of the pharyngeal apparatus and derivatives. The polypeptide is Protein ripply3 (Ripply3) (Mus musculus (Mouse)).